The chain runs to 1090 residues: ATP-dependent helicase/deoxyribonuclease subunit B (1090 aa).

7 to 14 (GPVGSGKS) lines the ATP pocket. [4Fe-4S] cluster contacts are provided by Cys719, Cys1035, Cys1038, and Cys1044.

It belongs to the helicase family. AddB/RexB type 1 subfamily. Heterodimer of AddA and AddB. Requires Mg(2+) as cofactor. It depends on [4Fe-4S] cluster as a cofactor.

The heterodimer acts as both an ATP-dependent DNA helicase and an ATP-dependent, dual-direction single-stranded exonuclease. Recognizes the chi site generating a DNA molecule suitable for the initiation of homologous recombination. The AddB subunit has 5' -&gt; 3' nuclease activity but not helicase activity. The sequence is that of ATP-dependent helicase/deoxyribonuclease subunit B from Carboxydothermus hydrogenoformans (strain ATCC BAA-161 / DSM 6008 / Z-2901).